A 61-amino-acid polypeptide reads, in one-letter code: [Thr6]-bradykinyl-Val,Asp (61 aa).

A signal peptide spans 1–22 (MSFLKKSLFLVLFLGLVSFSIC). A propeptide spanning residues 23–50 (EEEKRETEEEENEDEMDKESEEKRESPE) is cleaved from the precursor. The interval 24-61 (EEKRETEEEENEDEMDKESEEKRESPERPPGFTPFRVD) is disordered. Positions 30 to 41 (EEEENEDEMDKE) are enriched in acidic residues. 4-hydroxyproline; in form [Hyp3,Thr6]-bradykinyl-Val,Asp and [Hyp3,Thr6]-bradykinin is present on proline 53.

This sequence belongs to the frog skin active peptide (FSAP) family. Bradykinin-related peptide subfamily. As to expression, expressed by the skin glands.

The protein resides in the secreted. Its function is as follows. Induces relaxation of rat smooth muscle from tail artery (EC(50)=16.8 nM) and contraction of that from ileum (EC(50)=205 nM), urinary bladder (EC(50)=895 nM) and uterus (EC(50)=60.3 nM). Binds to both bradykinin receptor B1 (BDKRB1) and B2 (BDKRB2). [Hyp3,Thr6]-bradykinin: Induces relaxation of rat smooth muscle from tail artery (EC(50)=56.7 nM) and contraction of that from ileum (EC(50)=588 nM), urinary bladder (EC(50)=4.6 uM) and uterus (EC(50)=3.9 nM). Binds to both bradykinin receptor B1 (BDKRB1) and B2 (BDKRB2). In arterial smooth muscle, the effect via BDKRB1 is stronger, in uterus, ileum and urinary bladder that via BDKRB2. Functionally, induces relaxation of rat smooth muscle from tail artery (EC(50)=10.8 nM) and contraction of that from ileum (EC(50)=645 nM), urinary bladder (EC(50)=1.1 uM) and uterus (EC(50)=1.2 uM). Binds to both bradykinin receptor B1 (BDKRB1) and B2 (BDKRB2). Apart from uterus smooth muscle, the effect via B2 is stronger. In terms of biological role, [Hyp3,Thr6]-bradykinyl-Val,Asp: Induces relaxation of rat smooth muscle from tail artery (EC(50)=3.5 nM) and contraction of that from ileum (EC(50)=223 nM), urinary bladder (EC(50)=1.5 uM) and uterus (EC(50)=356 nM). Binds to both bradykinin receptor B1 (BDKRB1) and B2 (BDKRB2); the effects via B2 a stronger. In Agalychnis callidryas (Red-eyed tree frog), this protein is [Thr6]-bradykinyl-Val,Asp.